A 105-amino-acid chain; its full sequence is Small ribosomal subunit protein bS18 (105 aa).

The disordered stretch occupies residues 1–34 (MMINKEQDLNQLETNQEQSVEQNQTDEKRKPKPN). Polar residues predominate over residues 9–23 (LNQLETNQEQSVEQN).

Belongs to the bacterial ribosomal protein bS18 family. As to quaternary structure, part of the 30S ribosomal subunit. Forms a tight heterodimer with protein bS6.

Functionally, binds as a heterodimer with protein bS6 to the central domain of the 16S rRNA, where it helps stabilize the platform of the 30S subunit. The chain is Small ribosomal subunit protein bS18 from Mycoplasma genitalium (strain ATCC 33530 / DSM 19775 / NCTC 10195 / G37) (Mycoplasmoides genitalium).